We begin with the raw amino-acid sequence, 311 residues long: Meiotically up-regulated gene 146 protein (311 aa).

The protein resides in the cytoplasm. It is found in the nucleus. In terms of biological role, has a role in sporulation. The protein is Meiotically up-regulated gene 146 protein (mug146) of Schizosaccharomyces pombe (strain 972 / ATCC 24843) (Fission yeast).